Here is a 342-residue protein sequence, read N- to C-terminus: uncharacterized protein (342 aa).

The next 3 helical transmembrane spans lie at 35–55 (YFRV…WCFS), 134–154 (LLFL…IIYF), and 161–180 (LFIT…YCFS). Disordered stretches follow at residues 198-220 (SSDN…QQYN) and 311-342 (IINN…NYTN).

It localises to the membrane. This is an uncharacterized protein from Dictyostelium discoideum (Social amoeba).